Consider the following 582-residue polypeptide: Cryptochrome DASH, chloroplastic/mitochondrial (582 aa).

Residues 1-49 constitute a chloroplast and mitochondrion transit peptide; the sequence is MLHFLSSSSPLNPQFLLLPRQSARLRVLLSIPVSAMSSSSSSSSRGALA. The 151-residue stretch at 84–234 folds into the Photolyase/cryptochrome alpha/beta domain; sequence GVAIVWFRND…KLQLIWGATL (151 aa). Positions 560–582 are disordered; the sequence is GHQKRDQQFNRQRRPGHMYRRQK. Over residues 570 to 582 the composition is skewed to basic residues; the sequence is RQRRPGHMYRRQK.

Belongs to the DNA photolyase class-1 family. The cofactor is FAD. (6R)-5,10-methylene-5,6,7,8-tetrahydrofolate serves as cofactor.

Its subcellular location is the plastid. The protein localises to the chloroplast. The protein resides in the mitochondrion. May have a photoreceptor function. Binds ss- and ds-DNA in a sequence non-specific manner, lacks photolyase activity. This Oryza sativa subsp. japonica (Rice) protein is Cryptochrome DASH, chloroplastic/mitochondrial (CRYD).